The primary structure comprises 291 residues: Omega-amidase NIT3 (291 aa).

The CN hydrolase domain occupies 11–264; it reads IKVALVQLSG…EEIIYAELDP (254 aa). T34 is subject to Phosphothreonine. E53 functions as the Proton acceptor in the catalytic mechanism. K128 serves as the catalytic Proton donor. The Nucleophile role is filled by C169.

It belongs to the carbon-nitrogen hydrolase superfamily. NIT1/NIT2 family. In terms of assembly, homodimer.

The catalysed reaction is a monoamide of a dicarboxylate + H2O = a dicarboxylate + NH4(+). In terms of biological role, possesses omega-amidase activity. The role of omega-amidase is to remove potentially toxic intermediates by converting 2-oxoglutaramate and 2-oxosuccinamate to biologically useful 2-oxoglutarate and oxaloacetate, respectively. This chain is Omega-amidase NIT3 (NIT3), found in Saccharomyces cerevisiae (strain ATCC 204508 / S288c) (Baker's yeast).